Consider the following 425-residue polypeptide: Histidinol dehydrogenase (425 aa).

NAD(+)-binding residues include Tyr124, Gln184, and Asn207. Substrate contacts are provided by Ser230, Gln252, and His255. Zn(2+) is bound by residues Gln252 and His255. Residues Glu321 and His322 each act as proton acceptor in the active site. Positions 322, 355, 409, and 414 each coordinate substrate. Position 355 (Asp355) interacts with Zn(2+). His414 provides a ligand contact to Zn(2+).

The protein belongs to the histidinol dehydrogenase family. Zn(2+) is required as a cofactor.

It catalyses the reaction L-histidinol + 2 NAD(+) + H2O = L-histidine + 2 NADH + 3 H(+). Its pathway is amino-acid biosynthesis; L-histidine biosynthesis; L-histidine from 5-phospho-alpha-D-ribose 1-diphosphate: step 9/9. Catalyzes the sequential NAD-dependent oxidations of L-histidinol to L-histidinaldehyde and then to L-histidine. The chain is Histidinol dehydrogenase from Halobacterium salinarum (strain ATCC 700922 / JCM 11081 / NRC-1) (Halobacterium halobium).